The sequence spans 236 residues: Purine nucleoside phosphorylase DeoD-type 2 (236 aa).

His5 contacts a purine D-ribonucleoside. Phosphate contacts are provided by residues Gly21, Arg25, Arg44, and 88–91 (RVGS). Residues 180 to 182 (DME) and 204 to 205 (SD) each bind a purine D-ribonucleoside. Residue Asp205 is the Proton donor of the active site.

Belongs to the PNP/UDP phosphorylase family. Homohexamer; trimer of homodimers.

It carries out the reaction a purine D-ribonucleoside + phosphate = a purine nucleobase + alpha-D-ribose 1-phosphate. It catalyses the reaction a purine 2'-deoxy-D-ribonucleoside + phosphate = a purine nucleobase + 2-deoxy-alpha-D-ribose 1-phosphate. Catalyzes the reversible phosphorolytic breakdown of the N-glycosidic bond in the beta-(deoxy)ribonucleoside molecules, with the formation of the corresponding free purine bases and pentose-1-phosphate. In Vibrio parahaemolyticus serotype O3:K6 (strain RIMD 2210633), this protein is Purine nucleoside phosphorylase DeoD-type 2.